The sequence spans 396 residues: Elongation factor Tu (396 aa).

In terms of domain architecture, tr-type G spans 11–205; the sequence is KPHVNIGTIG…VIDEYIPTPV (195 aa). The interval 20–27 is G1; sequence GHVDHGKT. 20–27 is a binding site for GTP; it reads GHVDHGKT. Thr-27 contributes to the Mg(2+) binding site. A G2 region spans residues 61 to 65; the sequence is GITIN. Positions 82-85 are G3; sequence DAPG. GTP-binding positions include 82–86 and 137–140; these read DAPGH and NKTD. The tract at residues 137 to 140 is G4; that stretch reads NKTD. A G5 region spans residues 175–177; it reads SAL.

The protein belongs to the TRAFAC class translation factor GTPase superfamily. Classic translation factor GTPase family. EF-Tu/EF-1A subfamily. Monomer.

It localises to the cytoplasm. It catalyses the reaction GTP + H2O = GDP + phosphate + H(+). Its function is as follows. GTP hydrolase that promotes the GTP-dependent binding of aminoacyl-tRNA to the A-site of ribosomes during protein biosynthesis. The protein is Elongation factor Tu of Oenococcus oeni (strain ATCC BAA-331 / PSU-1).